Here is a 316-residue protein sequence, read N- to C-terminus: CD276 antigen (316 aa).

A signal peptide spans 1-28 (MLRGWGGPSVGVCVRTALGVLCLCLTGA). The Ig-like V-type domain maps to 29–139 (VEVQVSEDPV…DSAAVSLQVA (111 aa)). At 29–248 (VEVQVSEDPV…GQPLTFPPEA (220 aa)) the chain is on the extracellular side. N-linked (GlcNAc...) asparagine glycans are attached at residues asparagine 104, asparagine 189, and asparagine 215. The Ig-like C2-type domain maps to 145–238 (PSMTLEPNKD…QDAHGSVTIT (94 aa)). Cysteine 165 and cysteine 220 are disulfide-bonded. The chain crosses the membrane as a helical span at residues 249 to 269 (LWVTVGLSVCLVVLLVALAFV). Over 270–316 (CWRKIKQSCEEENAGAEDQDGDGEGSKTALRPLKPSENKEDDGQEIA) the chain is Cytoplasmic. The segment covering 280-292 (EENAGAEDQDGDG) has biased composition (acidic residues). The interval 280-316 (EENAGAEDQDGDGEGSKTALRPLKPSENKEDDGQEIA) is disordered.

It belongs to the immunoglobulin superfamily. BTN/MOG family. As to quaternary structure, interacts with TREML2 and this interaction enhances T-cell activation. Ubiquitous.

It is found in the membrane. In terms of biological role, modulates T-cell-mediated immune responses and the development of acute and chronic transplant rejection. Plays a positive regulatory role in bone formation and has a dual role in the bone-immune interface. Induces antitumor immunity as it activates both acquired and innate immunity leading to natural killer cell and CD8 T-cell dependent killing of tumor cells. This Mus musculus (Mouse) protein is CD276 antigen (Cd276).